We begin with the raw amino-acid sequence, 675 residues long: Vitamin K-dependent protein S (675 aa).

An N-terminal signal peptide occupies residues 1-24; the sequence is MRVLSARFRVLLACLALVIPVSET. Positions 25–41 are excised as a propeptide; the sequence is NFLSKERASQVLVRKRR. The Gla domain occupies 42-87; it reads ANTLFEETMKGNLERECIEELCNKEEAREVFENNPETDYFYPKYLG. Residues glutamate 47, glutamate 48, glutamate 55, glutamate 57, glutamate 60, glutamate 61, glutamate 66, glutamate 67, glutamate 70, glutamate 73, and glutamate 77 each carry the 4-carboxyglutamate modification. Cysteine 58 and cysteine 63 are oxidised to a cystine. The interval 88-116 is thrombin-sensitive; it reads CLGAFRVGSFHAARQSANAYPDLRSCVKA. The 39-residue stretch at 117 to 155 folds into the EGF-like 1 domain; it reads ISDQCDPIPCNEDGYLACQDGQAAFTCFCKPGWQGDRCQ. 13 disulfides stabilise this stretch: cysteine 121–cysteine 134, cysteine 126–cysteine 143, cysteine 145–cysteine 154, cysteine 161–cysteine 175, cysteine 171–cysteine 184, cysteine 186–cysteine 199, cysteine 205–cysteine 217, cysteine 212–cysteine 226, cysteine 228–cysteine 241, cysteine 247–cysteine 256, cysteine 252–cysteine 265, cysteine 267–cysteine 282, and cysteine 449–cysteine 475. Aspartate 136 bears the (3R)-3-hydroxyaspartate mark. The EGF-like 2; calcium-binding domain occupies 157-200; sequence DVNECKDPSNVNGGCSQICDNTPGSYHCSCKRGFAMLPNKKDCK. In terms of domain architecture, EGF-like 3; calcium-binding spans 201-242; it reads DLDECALKPSVCGTAVCKNIPGDFECECPDGYRYDPSSKSCK. Residues 243–283 enclose the EGF-like 4; calcium-binding domain; sequence DVDECSENMCAQLCVNFPGGYSCYCDGKKGFKLAQDQKSCE. Laminin G-like domains lie at 299-475 and 484-665; these read LLYL…NKHC and YYPG…AHSC. N-linked (GlcNAc...) asparagine glycosylation is found at asparagine 499 and asparagine 509. A disulfide bridge connects residues cysteine 638 and cysteine 665.

The iron and 2-oxoglutarate dependent 3-hydroxylation of aspartate and asparagine is (R) stereospecific within EGF domains. In terms of tissue distribution, plasma.

It is found in the secreted. Functionally, anticoagulant plasma protein; it is a cofactor to activated protein C in the degradation of coagulation factors Va and VIIIa. It helps to prevent coagulation and stimulating fibrinolysis. The polypeptide is Vitamin K-dependent protein S (Pros1) (Mus musculus (Mouse)).